Reading from the N-terminus, the 173-residue chain is Trafficking regulator of GLUT4 1 (173 aa).

The segment covering 1 to 10 (MANPAQPPLQ) has biased composition (pro residues). The disordered stretch occupies residues 1–20 (MANPAQPPLQDPGSTSPLEL). Topologically, residues 1–102 (MANPAQPPLQ…QDQEAPKDYL (102 aa)) are cytoplasmic. A phosphoserine mark is found at Ser16, Ser43, Ser45, Ser70, Ser84, and Ser85. The helical intramembrane region spans 103–123 (VLAIASCFCPVWPLNLIPLIF). Topologically, residues 124–150 (SIMSRSSVQQGDLDGARRLGRLARLLS) are cytoplasmic. Residues 151–171 (ITFIILGIVIIIVAVTVNFTV) form a helical membrane-spanning segment. Topologically, residues 172 to 173 (PK) are extracellular.

Belongs to the CD225/Dispanin family. As to quaternary structure, interacts with SLC2A4; the interaction is required for proper SLC2A4 reacycling after insulin stimulation. In terms of tissue distribution, expressed specifically in white and brown adipose tissues.

It localises to the cell membrane. The protein resides in the endomembrane system. The protein localises to the cytoplasm. Its subcellular location is the perinuclear region. Its function is as follows. Regulates insulin-mediated adipose tissue glucose uptake and transport by modulation of SLC2A4 recycling. Not required for SLC2A4 membrane fusion upon an initial stimulus, but rather is necessary for proper protein recycling during prolonged insulin stimulation. In Mus musculus (Mouse), this protein is Trafficking regulator of GLUT4 1 (Trarg1).